The chain runs to 165 residues: Lipoprotein signal peptidase (165 aa).

3 helical membrane passes run 12 to 32 (WLWL…LILQ), 70 to 90 (WFFA…MYRA), and 102 to 122 (ALII…GFVV). Residues aspartate 123 and aspartate 141 contribute to the active site. The helical transmembrane segment at 137–157 (FNLADTAICIGAALVVLEGFL) threads the bilayer.

It belongs to the peptidase A8 family.

Its subcellular location is the cell inner membrane. The catalysed reaction is Release of signal peptides from bacterial membrane prolipoproteins. Hydrolyzes -Xaa-Yaa-Zaa-|-(S,diacylglyceryl)Cys-, in which Xaa is hydrophobic (preferably Leu), and Yaa (Ala or Ser) and Zaa (Gly or Ala) have small, neutral side chains.. It functions in the pathway protein modification; lipoprotein biosynthesis (signal peptide cleavage). Its function is as follows. This protein specifically catalyzes the removal of signal peptides from prolipoproteins. The chain is Lipoprotein signal peptidase from Cronobacter sakazakii (strain ATCC BAA-894) (Enterobacter sakazakii).